The primary structure comprises 608 residues: Protein Spindly (608 aa).

Met1 is modified (N-acetylmethionine). Residues 1-445 adopt a coiled-coil conformation; the sequence is MEADITNLRN…LKLKYEPEER (445 aa). Residues 465–487 form a disordered region; sequence PEETEETAAASATEDGVSRLPPH. A phosphoserine mark is found at Ser516, Ser518, and Ser558.

Belongs to the Spindly family. In terms of assembly, interacts with KNTC1 and ZW10. These interactions appear weak and may be transient or indirect. Interacts with dynein intermediate chain and dynactin (DCTN1). Interacts with the catalytically active form of USP45. Post-translationally, monoubiquitinated with'Lys-48' linkage. Deubiquitinated by USP45.

It localises to the cytoplasm. Its subcellular location is the cytoskeleton. It is found in the microtubule organizing center. The protein resides in the centrosome. The protein localises to the chromosome. It localises to the centromere. Its subcellular location is the kinetochore. It is found in the nucleus. The protein resides in the spindle pole. Its function is as follows. Required for the localization of dynein and dynactin to the mitotic kintochore. Dynein is believed to control the initial lateral interaction between the kinetochore and spindle microtubules and to facilitate the subsequent formation of end-on kinetochore-microtubule attachments mediated by the NDC80 complex. Also required for correct spindle orientation. Does not appear to be required for the removal of spindle assembly checkpoint (SAC) proteins from the kinetochore upon bipolar spindle attachment. Acts as an adapter protein linking the dynein motor complex to various cargos and converts dynein from a non-processive to a highly processive motor in the presence of dynactin. Facilitates the interaction between dynein and dynactin and activates dynein processivity (the ability to move along a microtubule for a long distance without falling off the track). Plays a role in cell migration. This is Protein Spindly (Spdl1) from Mus musculus (Mouse).